Reading from the N-terminus, the 532-residue chain is E3 ubiquitin-protein ligase ICP0 (532 aa).

8 residues coordinate Zn(2+): Cys-8, Cys-11, Cys-24, His-26, Cys-29, Cys-32, Cys-43, and Cys-46. Residues Cys-8–Lys-47 form an RING-type zinc finger. Disordered regions lie at residues Glu-206–Pro-391, Ala-406–Arg-426, Glu-461–Gly-498, and Gln-510–Gln-532. 2 stretches are compositionally biased toward acidic residues: residues Ser-217–Val-227 and Asp-234–Ser-243. Over residues Arg-286–Pro-295 the composition is skewed to basic residues.

In terms of processing, auto-ubiquitinated.

The catalysed reaction is S-ubiquitinyl-[E2 ubiquitin-conjugating enzyme]-L-cysteine + [acceptor protein]-L-lysine = [E2 ubiquitin-conjugating enzyme]-L-cysteine + N(6)-ubiquitinyl-[acceptor protein]-L-lysine.. Evades nuclear antiviral defenses triggered by dsDNA viruses. Acts during the initial stages of lytic infection and the reactivation of latent viral genome. Prevents the antiviral effect of nuclear bodies by degrading host PML and SP100. The polypeptide is E3 ubiquitin-protein ligase ICP0 (63) (Equus caballus (Horse)).